Reading from the N-terminus, the 536-residue chain is Multicopper oxidase terE (536 aa).

A disordered region spans residues 1–21 (MHWHGLSQSTAPFSDGSPQAS). Plastocyanin-like domains lie at 1–67 (MHWH…VEEK), 79–238 (ERIL…LSYN), and 354–488 (TVQK…VWMM). Residues histidine 2, histidine 4, histidine 48, and histidine 50 each contribute to the Cu cation site. Histidine 397 contacts Cu cation.

This sequence belongs to the multicopper oxidase family.

It participates in secondary metabolite biosynthesis. Functionally, multicopper oxidase; part of the gene cluster that mediates the biosynthesis of terrein, a fungal metabolite with ecological, antimicrobial, antiproliferative, and antioxidative activities. The first step in the pathway is performed by the polyketide synthase terA that produces 4-hydroxy-6-methylpyranon (4-HMP), orsellinic acid (OA), and 2,3-dehydro-6-hydroxymellein (2,3-dehydro-6-HM) by condensing acetyl-CoA with two, three, or four malonyl-CoA units, respectively. 4-HMP and OA are not pathway intermediates, but are rather shunt or side products. 2,3-dehydro-6-HM is further converted to 6-hydroxymellein (6-HM) by the 6-hydroxymellein synthase terB. The monooxygenases terC and terD, the multicopper oxidase terE and the Kelch-like protein terF are then involved in the transformation of 6-HM to terrein. Even if they are co-regulated with the other terrein cluster genes, terH and terI seem to be dispensable for terrein production; whereas one or both of the 2 transporters terG and terJ are probably required for efficient secretion of metabolites. The polypeptide is Multicopper oxidase terE (Aspergillus terreus (strain NIH 2624 / FGSC A1156)).